The chain runs to 233 residues: Protein Atu3128 (233 aa).

It belongs to the glycosyl hydrolase 88 family.

In terms of biological role, seems to regulate the surface properties of the bacterium in the presence of plant cells or plant cell extracts. Mutations in this protein are responsible for an increased aggregation of the bacteria in the presence of pea root cap cells. The polypeptide is Protein Atu3128 (Agrobacterium fabrum (strain C58 / ATCC 33970) (Agrobacterium tumefaciens (strain C58))).